A 132-amino-acid chain; its full sequence is Small ribosomal subunit protein uS8 (132 aa).

Belongs to the universal ribosomal protein uS8 family. Part of the 30S ribosomal subunit. Contacts proteins S5 and S12.

Its function is as follows. One of the primary rRNA binding proteins, it binds directly to 16S rRNA central domain where it helps coordinate assembly of the platform of the 30S subunit. The chain is Small ribosomal subunit protein uS8 from Corynebacterium glutamicum (strain R).